A 407-amino-acid polypeptide reads, in one-letter code: Myeloid cell nuclear differentiation antigen (407 aa).

One can recognise a Pyrin domain in the interval 1–88 (MVNEYKKILL…VNNLRKEKSK (88 aa)). Residues 108-207 (EVGLAAPAPT…RQVDARRNVP (100 aa)) form a disordered region. The Nuclear localization signal motif lies at 131-137 (PVAQKRK). Residues 139 to 148 (PNKEKTEAKR) show a composition bias toward basic and acidic residues. Residues 177–190 (QTSSSTPSNTSFTP) show a composition bias toward low complexity. The HIN-200 domain maps to 196 to 394 (AQRQVDARRN…CGSHSFIKVI (199 aa)).

Participates in a ternary complex with YY1 and the YY1 target DNA element. Binds nucleolin and nucleophosmin/NPM/B23. In terms of tissue distribution, expressed constitutively in cells of the myeloid lineage. Found in promyelocyte stage cells as well as in all other stage cells including peripheral blood monocytes and granulocytes. Also appears in myeloblast cells in some cases of acute myeloid Leukemia.

It localises to the nucleus. It is found in the cytoplasm. Functionally, may act as a transcriptional activator/repressor in the myeloid lineage. Plays a role in the granulocyte/monocyte cell-specific response to interferon. Stimulates the DNA binding of the transcriptional repressor protein YY1. This chain is Myeloid cell nuclear differentiation antigen (MNDA), found in Homo sapiens (Human).